Consider the following 778-residue polypeptide: DNA repair protein crb2 (778 aa).

The disordered stretch occupies residues 35–56; the sequence is KVNASINPSPPRSNDNSNKEFS. Residue T73 is modified to Phosphothreonine; by ATM. Position 80 is a phosphoserine; by ATM (S80). Residues 141–245 form an interaction with rad4 region; the sequence is VSNSSQILSP…PPAFLPETSE (105 aa). T187 carries the phosphothreonine modification. At T215 the chain carries Phosphothreonine; by cdc2. T235 carries the phosphothreonine modification. A tudor-like region spans residues 358–493; sequence SRRSFKNRVL…RRFQGRDLSF (136 aa). An interaction with dimethylated histone H4 region spans residues 370–404; it reads FKGYPSFYYPATLVAPVHSAVTSSIMYKVQFDDAT. The region spanning 535-653 is the BRCT domain; that stretch reads SNQLIFDDCV…RVVDFSPYLL (119 aa).

Homodimer. Dimerization is mediated via the BRCT domain. Interacts (via BRCT domain) with rad3. Interacts with rad4 (via BRCT1,2 domains); a single rad4 molecule interacts simultaneously with both Thr-187 phosphorylation sites in a crb2 dimer. Interacts (via Tudor domain) with histone H4K20me2. Interacts (via BRCT dmain) with histone H2AS128ph (gamma-H2A). Interacts with chk1. Interacts with sad1. In terms of processing, phosphorylation of Thr-73 and Ser-80 by rad3/ATM promotes interaction with chk1. Phosphorylation at Thr-187 is dependent on phosphorylation at Thr-215 and Thr-235. Phosphorylation at Thr-215 and Thr-235 may prime the non-canonical Thr-187 site for cdc2/CDK phosphorylation.

It localises to the nucleus. Functionally, essential for cell cycle arrest at the G1 and G2 stages following DNA damage by X-, and UV-irradiation, or inactivation of DNA ligase. Plays a role in the response to DNA damage. Interaction with rad4 via its phosphorylation sites in the N-terminus couples the DNA checkpoint apparatus to chromatin via interaction of its C-terminal BRCT domains with epigenetic modifications on histones H4 and H2A, respectively, in the G1/S phase of the cell cycle, and facilitates recruitment of the checkpoint kinase chk1. The protein is DNA repair protein crb2 of Schizosaccharomyces pombe (strain 972 / ATCC 24843) (Fission yeast).